The primary structure comprises 905 residues: uncharacterized protein (905 aa).

WD repeat units lie at residues 42–82, 86–128, 136–175, and 177–217; these read RSLK…FQAV, GYAR…SDPK, STLDGVSSVCYKKDTPLLLTGSTSRSVHIIDTRQQLDSVS, and VNTQ…SDNY. Phosphoserine occurs at positions 394 and 397.

Belongs to the WD repeat mio family.

This is an uncharacterized protein from Schizosaccharomyces pombe (strain 972 / ATCC 24843) (Fission yeast).